Reading from the N-terminus, the 717-residue chain is DNA-directed RNA polymerase subunit beta' (717 aa).

Residues Cys71, Cys73, Cys91, and Cys94 each coordinate Zn(2+). Mg(2+)-binding residues include Asp481, Asp483, and Asp485.

This sequence belongs to the RNA polymerase beta' chain family. RpoC1 subfamily. As to quaternary structure, in plastids the minimal PEP RNA polymerase catalytic core is composed of four subunits: alpha, beta, beta', and beta''. When a (nuclear-encoded) sigma factor is associated with the core the holoenzyme is formed, which can initiate transcription. The cofactor is Mg(2+). Zn(2+) is required as a cofactor.

It is found in the plastid. It localises to the chloroplast. The enzyme catalyses RNA(n) + a ribonucleoside 5'-triphosphate = RNA(n+1) + diphosphate. Functionally, DNA-dependent RNA polymerase catalyzes the transcription of DNA into RNA using the four ribonucleoside triphosphates as substrates. The protein is DNA-directed RNA polymerase subunit beta' of Chlorokybus atmophyticus (Soil alga).